We begin with the raw amino-acid sequence, 1018 residues long: Cytadherence high molecular weight protein 1 (1018 aa).

2 coiled-coil regions span residues 782–815 and 849–880; these read NRFLLIKKELQAELTRLIEENEQLKAEFLNAKDL and ELVRNIQKAILENESKIKNIQITLKELKAVYK.

Post-translationally, phosphorylated mainly on serine residues.

It is found in the cell projection. The protein resides in the attachment organelle membrane. In terms of biological role, component of the cytoskeleton-like structure which stabilizes the shape of the wall-less Mycoplasma. This cytoskeleton-like network of accessory proteins containing HMW proteins 1 to 5 allows the proper anchoring of cytadhesin proteins in the mycoplasmal membrane at the attachment organelle. The protein is Cytadherence high molecular weight protein 1 (hmw1) of Mycoplasma pneumoniae (strain ATCC 29342 / M129 / Subtype 1) (Mycoplasmoides pneumoniae).